The primary structure comprises 82 residues: ATP synthase subunit c, chloroplastic (82 aa).

The next 2 helical transmembrane spans lie at 3-23 (PIIS…AAIG) and 57-77 (LAFM…LLFA).

The protein belongs to the ATPase C chain family. In terms of assembly, F-type ATPases have 2 components, F(1) - the catalytic core - and F(0) - the membrane proton channel. F(1) has five subunits: alpha(3), beta(3), gamma(1), delta(1), epsilon(1). F(0) has four main subunits: a(1), b(1), b'(1) and c(10-14). The alpha and beta chains form an alternating ring which encloses part of the gamma chain. F(1) is attached to F(0) by a central stalk formed by the gamma and epsilon chains, while a peripheral stalk is formed by the delta, b and b' chains.

It localises to the plastid. Its subcellular location is the chloroplast thylakoid membrane. Functionally, f(1)F(0) ATP synthase produces ATP from ADP in the presence of a proton or sodium gradient. F-type ATPases consist of two structural domains, F(1) containing the extramembraneous catalytic core and F(0) containing the membrane proton channel, linked together by a central stalk and a peripheral stalk. During catalysis, ATP synthesis in the catalytic domain of F(1) is coupled via a rotary mechanism of the central stalk subunits to proton translocation. In terms of biological role, key component of the F(0) channel; it plays a direct role in translocation across the membrane. A homomeric c-ring of between 10-14 subunits forms the central stalk rotor element with the F(1) delta and epsilon subunits. This chain is ATP synthase subunit c, chloroplastic, found in Cyanidium caldarium (Red alga).